The chain runs to 259 residues: Probable metal transport system ATP-binding protein TC_0339 (259 aa).

Residues 9 to 241 (WAVDDLCVNY…AIFQAYGCEL (233 aa)) form the ABC transporter domain. Residue 41-48 (GPNGAGKS) participates in ATP binding.

It belongs to the ABC transporter superfamily.

The protein localises to the cell inner membrane. Part of an ATP-driven transport system TC_0338/TC_0339/TC_0341/TC_0342 for a metal. Probably responsible for energy coupling to the transport system. This is Probable metal transport system ATP-binding protein TC_0339 from Chlamydia muridarum (strain MoPn / Nigg).